The following is a 295-amino-acid chain: Putative attaching and effacing protein homolog (295 aa).

The first 25 residues, 1–25, serve as a signal peptide directing secretion; the sequence is MSHYKTGHKQPRFRYSVLARCVAWA.

This sequence belongs to the intimin/invasin family.

The chain is Putative attaching and effacing protein homolog (eaeH) from Escherichia coli (strain K12).